The primary structure comprises 1070 residues: Regulator of Ty1 transposition protein 107 (1070 aa).

4 consecutive BRCT domains span residues 2 to 103 (STSL…QDSV), 117 to 213 (NPFH…LYHF), 260 to 352 (HPNK…FYMF), and 369 to 453 (PFHA…EQCY). The residue at position 304 (Ser304) is a Phosphoserine. At Thr532 the chain carries Phosphothreonine. Residues 572 to 659 (SRASFPVVDS…LQVQLGQRTK (88 aa)) form a disordered region. A compositionally biased stretch (basic and acidic residues) spans 580-592 (DSKKSNLQKKDSN). Residues Ser591 and Ser593 each carry the phosphoserine modification. 2 stretches are compositionally biased toward basic and acidic residues: residues 603-615 (CEGH…KEFT) and 622-645 (DAPK…KKEE). Ser720 carries the phosphoserine modification. The span at 722-731 (NDDHINDEKP) shows a compositional bias: basic and acidic residues. The disordered stretch occupies residues 722 to 753 (NDDHINDEKPAVNSKYTTPKTSQNITSGVDTP). Residues 735 to 753 (SKYTTPKTSQNITSGVDTP) are compositionally biased toward polar residues. Phosphoserine occurs at positions 800 and 806. BRCT domains lie at 829 to 910 (FNEL…IDLL) and 934 to 1049 (GINE…CVES).

In terms of assembly, forms a complex with the cullin-RING ligase (CRL) RTT101(MMS1-MMS22). Interacts with MMS22 and RTT101. Interacts with histone H2A; requires H2A to be phosphorylated (gamma-H2A). Interacts with RAD55. Post-translationally, phosphorylated by MEC1.

Its subcellular location is the nucleus. In terms of biological role, required for resumption of chromosome replication after DNA damage, specifically in S phase. Is recruited to chromatin in the presence of RTT109 and RTT101 in response to stalled replication forks and acts as a scaffold during DNA repair. In Saccharomyces cerevisiae (strain ATCC 204508 / S288c) (Baker's yeast), this protein is Regulator of Ty1 transposition protein 107 (RTT107).